A 211-amino-acid chain; its full sequence is Orotate phosphoribosyltransferase (211 aa).

Residue Lys-26 participates in 5-phospho-alpha-D-ribose 1-diphosphate binding. Orotate is bound at residue 34-35 (FF). 5-phospho-alpha-D-ribose 1-diphosphate is bound by residues 72–73 (YK), Arg-98, Lys-99, Lys-102, His-104, and 123–131 (DDVITAGTA). 2 residues coordinate orotate: Thr-127 and Arg-155.

This sequence belongs to the purine/pyrimidine phosphoribosyltransferase family. PyrE subfamily. In terms of assembly, homodimer. Mg(2+) is required as a cofactor.

The enzyme catalyses orotidine 5'-phosphate + diphosphate = orotate + 5-phospho-alpha-D-ribose 1-diphosphate. Its pathway is pyrimidine metabolism; UMP biosynthesis via de novo pathway; UMP from orotate: step 1/2. Catalyzes the transfer of a ribosyl phosphate group from 5-phosphoribose 1-diphosphate to orotate, leading to the formation of orotidine monophosphate (OMP). The protein is Orotate phosphoribosyltransferase of Legionella pneumophila (strain Lens).